The sequence spans 458 residues: Phosphoglucosamine mutase (458 aa).

Residue Ser106 is the Phosphoserine intermediate of the active site. Mg(2+) contacts are provided by Ser106, Asp247, Asp249, and Asp251. A Phosphoserine modification is found at Ser106.

Belongs to the phosphohexose mutase family. Requires Mg(2+) as cofactor. Post-translationally, activated by phosphorylation.

The catalysed reaction is alpha-D-glucosamine 1-phosphate = D-glucosamine 6-phosphate. In terms of biological role, catalyzes the conversion of glucosamine-6-phosphate to glucosamine-1-phosphate. The polypeptide is Phosphoglucosamine mutase (Chlamydia caviae (strain ATCC VR-813 / DSM 19441 / 03DC25 / GPIC) (Chlamydophila caviae)).